A 268-amino-acid polypeptide reads, in one-letter code: Tryptophan synthase alpha chain (268 aa).

Active-site proton acceptor residues include glutamate 49 and aspartate 60.

This sequence belongs to the TrpA family. Tetramer of two alpha and two beta chains.

It carries out the reaction (1S,2R)-1-C-(indol-3-yl)glycerol 3-phosphate + L-serine = D-glyceraldehyde 3-phosphate + L-tryptophan + H2O. It functions in the pathway amino-acid biosynthesis; L-tryptophan biosynthesis; L-tryptophan from chorismate: step 5/5. Functionally, the alpha subunit is responsible for the aldol cleavage of indoleglycerol phosphate to indole and glyceraldehyde 3-phosphate. This chain is Tryptophan synthase alpha chain, found in Escherichia coli O1:K1 / APEC.